We begin with the raw amino-acid sequence, 1058 residues long: Protein translocase subunit SECA2, chloroplastic (1058 aa).

The transit peptide at 1–58 directs the protein to the chloroplast; it reads MGSVSNLVSPNICHPAPPCLTSRSNKFPWTKPISGLLFYRSVTPIKRCHLVRRSCVVS. 167–174 is a binding site for ATP; sequence MKTGEGKT.

The protein belongs to the SecA family. As to quaternary structure, part of a second Sec protein translocation apparatus. Interacts probably with SCY2.

Its subcellular location is the plastid. It is found in the chloroplast membrane. It carries out the reaction ATP + H2O + chloroplast-proteinSide 1 = ADP + phosphate + chloroplast-proteinSide 2.. Involved in protein export. Probably interacts with other proteins to allow the postimport or conservative sorting pathway for inner membrane proteins in plastids. May have a central role in coupling the hydrolysis of ATP to the transfer of proteins across the membrane. The polypeptide is Protein translocase subunit SECA2, chloroplastic (Arabidopsis thaliana (Mouse-ear cress)).